A 601-amino-acid chain; its full sequence is Glutamine--fructose-6-phosphate aminotransferase [isomerizing] (601 aa).

Catalysis depends on Cys-2, which acts as the Nucleophile; for GATase activity. The region spanning 2 to 218 (CGIVGYIGYD…DHEIVIVKRD (217 aa)) is the Glutamine amidotransferase type-2 domain. SIS domains are found at residues 284-423 (IIND…NHGR) and 453-591 (IATD…VDKP). Residue Lys-596 is the For Fru-6P isomerization activity of the active site.

Homodimer.

It localises to the cytoplasm. It catalyses the reaction D-fructose 6-phosphate + L-glutamine = D-glucosamine 6-phosphate + L-glutamate. Catalyzes the first step in hexosamine metabolism, converting fructose-6P into glucosamine-6P using glutamine as a nitrogen source. The chain is Glutamine--fructose-6-phosphate aminotransferase [isomerizing] from Staphylococcus epidermidis (strain ATCC 35984 / DSM 28319 / BCRC 17069 / CCUG 31568 / BM 3577 / RP62A).